The following is a 274-amino-acid chain: Penicillin-insensitive murein endopeptidase (274 aa).

The N-terminal stretch at 1 to 19 (MKKTAIALLAWFVSSASLA) is a signal peptide. Intrachain disulfides connect cysteine 44–cysteine 265, cysteine 187–cysteine 235, and cysteine 216–cysteine 223. Residues histidine 110, histidine 113, aspartate 120, aspartate 147, histidine 150, and histidine 211 each coordinate Zn(2+). Residues 225–274 (DQPLPPPGDGCGAELQSWFEPPKPGTTKPEKKTPPPLPPSCQALLDEHVL) are disordered.

The protein belongs to the peptidase M74 family. Dimer. The cofactor is Zn(2+).

It is found in the periplasm. Functionally, murein endopeptidase that cleaves the D-alanyl-meso-2,6-diamino-pimelyl amide bond that connects peptidoglycan strands. Likely plays a role in the removal of murein from the sacculus. The chain is Penicillin-insensitive murein endopeptidase from Salmonella arizonae (strain ATCC BAA-731 / CDC346-86 / RSK2980).